We begin with the raw amino-acid sequence, 849 residues long: BRCT-containing protein 1 (849 aa).

BRCT domains follow at residues 1-75 (MLAA…FYSC), 76-167 (NPYL…PYLF), and 282-370 (PSVG…DFPV). 2 disordered regions span residues 453 to 519 (QSAD…ASSD) and 606 to 632 (KKRR…NTNA). The segment covering 480-493 (ELQDEGRLEIDAKS) has biased composition (basic and acidic residues). 2 BRCT domains span residues 625-715 (SESR…PYLL) and 738-843 (QGPS…RIAD).

In terms of assembly, interacts with gammaH2A; binds phosphohistone H2A (gammaH2A) formed by Rad3/ATR checkpoint kinase at DNA lesions. Interacts with Rhp18/Rad18. Interacts with Nse5-Nse6; this allows to tether Smc5-Smc6 at replicative DNA lesions.

It localises to the nucleus. The protein resides in the chromosome. Required for resumption of chromosome replication after DNA damage, specifically in S phase. Is recruited to chromatin in response to stalled replication forks and acts as a scaffold during DNA repair. Required for the accumulation of the Smc5-Smc6 genome stability complex in foci during replication stress and for activation of the intrinsic SUMO ligase activity of the complex by collapsed replication forks. In pericentromeric heterochromatin, enhances Clr4/Suv39-mediated H3 Lys-9 dimethylation (H3K9me2), required for stabilization of stalled replication forks and accurate chromosome segregation during mitosis. Its function is as follows. Required for mitotic fidelity, specifically in the G2 phase of the cell cycle. Plays a role in chromatin organization. The polypeptide is BRCT-containing protein 1 (brc1) (Schizosaccharomyces pombe (strain 972 / ATCC 24843) (Fission yeast)).